We begin with the raw amino-acid sequence, 333 residues long: GDP-fucose transporter 1 (333 aa).

8 helical membrane-spanning segments follow: residues 13–33, 45–65, 95–115, 139–159, 169–189, 211–231, 239–259, and 293–313; these read SIKIAFVVALYWVVSISMVFL, APMFVTWFQCVVAVVTCFILG, LVFVGMIAFNNLALKFVGVAF, TSMPALLMCGVIVAGFFVGVN, MAGIMYGVLASLCVALNAIYI, AIFLFLPVITFMGEIPDIAAS, YWFLMTVAGLLGIAIGLVSML, and TATWWLGNVFVLGGSLGYVLV.

Belongs to the TPT transporter family. SLC35C subfamily.

It localises to the golgi apparatus membrane. It catalyses the reaction GMP(out) + GDP-beta-L-fucose(in) = GMP(in) + GDP-beta-L-fucose(out). Antiporter specific for GDP-l-fucose and depending on the concomitant reverse transport of GMP. Involved in GDP-fucose import from the cytoplasm into the Golgi lumen. This Monosiga brevicollis (Choanoflagellate) protein is GDP-fucose transporter 1 (slc35c1).